Consider the following 428-residue polypeptide: Enolase (428 aa).

Gln165 serves as a coordination point for (2R)-2-phosphoglycerate. Glu207 functions as the Proton donor in the catalytic mechanism. Mg(2+) contacts are provided by Asp244, Glu285, and Asp312. (2R)-2-phosphoglycerate is bound by residues Lys337, Arg366, Ser367, and Lys388. Catalysis depends on Lys337, which acts as the Proton acceptor.

Belongs to the enolase family. Component of the RNA degradosome, a multiprotein complex involved in RNA processing and mRNA degradation. It depends on Mg(2+) as a cofactor.

It localises to the cytoplasm. Its subcellular location is the secreted. It is found in the cell surface. The enzyme catalyses (2R)-2-phosphoglycerate = phosphoenolpyruvate + H2O. It participates in carbohydrate degradation; glycolysis; pyruvate from D-glyceraldehyde 3-phosphate: step 4/5. Catalyzes the reversible conversion of 2-phosphoglycerate (2-PG) into phosphoenolpyruvate (PEP). It is essential for the degradation of carbohydrates via glycolysis. This is Enolase from Coxiella burnetii (strain Dugway 5J108-111).